Here is a 483-residue protein sequence, read N- to C-terminus: Phloretin 2'-O-glucosyltransferase (483 aa).

His15 functions as the Proton acceptor in the catalytic mechanism. An an anthocyanidin-binding site is contributed by His15. Asp118 acts as the Charge relay in catalysis. Residues Thr140, Ala360, Gln362, His377, Trp380, Asn381, Ser382, and Glu385 each contribute to the UDP-alpha-D-glucose site. Residue Ala400 participates in an anthocyanidin binding. The UDP-alpha-D-glucose site is built by Glu401 and Gln402.

This sequence belongs to the UDP-glycosyltransferase family.

It carries out the reaction phloretin + UDP-alpha-D-glucose = phlorizin + UDP + H(+). Functionally, glycosyltransferase that possesses phloretin 2'-O-glycosyltransferase activity. Converts phloretin to phlorizin (phloretin 2'-O-glucoside), a potent antioxidant. Is specific for phloretin and does not possess glycosyltransferase activity toward naringenin, naringenin chalcone, eriodictyol, eriodictyol chalcone, apigenin, luteolin, kaempferol, quercetin, isoliquiritigenin, butein, caffeic acid, 2-coumaric acid, 3-coumaric acid, 3-hydroxybenzoic acid, 3,4-dihydroxybenzoic acid and 3,4-dihydroxyhydrocinnamic acid. Can glycosylate phloretin in the presence of UDP-glucose, UDP-xylose and UDP-galactose. The sequence is that of Phloretin 2'-O-glucosyltransferase from Pyrus communis (Pear).